A 548-amino-acid chain; its full sequence is Undecaprenyl phosphate-alpha-4-amino-4-deoxy-L-arabinose arabinosyl transferase 1 (548 aa).

12 consecutive transmembrane segments (helical) span residues 11–31 (WLLF…TRLL), 89–109 (IVVV…AMVV), 114–134 (ALAF…AIGT), 137–157 (ILDP…LVAL), 180–200 (FLTK…VMAI), 214–234 (IALL…ALQA), 263–283 (FYIP…FGAL), 292–312 (GTLY…ASKG), 314–334 (LLTY…HYIE), 347–367 (VNAS…IYSL), 382–402 (KIVL…GALF), and 405–425 (TQFL…YAIP).

This sequence belongs to the glycosyltransferase 83 family.

The protein resides in the cell inner membrane. It catalyses the reaction 4-amino-4-deoxy-alpha-L-arabinopyranosyl di-trans,octa-cis-undecaprenyl phosphate + lipid IVA = lipid IIA + di-trans,octa-cis-undecaprenyl phosphate.. Its pathway is lipopolysaccharide metabolism; 4-amino-4-deoxy-beta-L-arabinose-lipid A biosynthesis. In terms of biological role, catalyzes the transfer of the L-Ara4N moiety of the glycolipid undecaprenyl phosphate-alpha-L-Ara4N to lipid A. The modified arabinose is attached to lipid A and is required for resistance to polymyxin and cationic antimicrobial peptides. The protein is Undecaprenyl phosphate-alpha-4-amino-4-deoxy-L-arabinose arabinosyl transferase 1 of Proteus mirabilis (strain HI4320).